The sequence spans 422 residues: UPF0229 protein SO_2883 (422 aa).

Residues 60-111 (SEPMFHQGKGGVRDRVHPGNDQFTRGDKIDRPQGGSGGGAGKGDASDSGEGN) are disordered. Residues 70–90 (GVRDRVHPGNDQFTRGDKIDR) show a composition bias toward basic and acidic residues.

This sequence belongs to the UPF0229 family.

The sequence is that of UPF0229 protein SO_2883 from Shewanella oneidensis (strain ATCC 700550 / JCM 31522 / CIP 106686 / LMG 19005 / NCIMB 14063 / MR-1).